We begin with the raw amino-acid sequence, 663 residues long: Polyunsaturated fatty acid lipoxygenase ALOX15 (663 aa).

In terms of domain architecture, PLAT spans 2–115; the sequence is GLYRVRVSTG…ILSLPEGTAR (114 aa). Positions 116–663 constitute a Lipoxygenase domain; the sequence is TVVDDPQGLF…PSRVENSVAI (548 aa). 5 residues coordinate Fe cation: His361, His366, His541, His545, and Ile663.

The protein belongs to the lipoxygenase family. In terms of assembly, interacts with PEBP1; in response to IL13/interleukin-13, prevents the interaction of PEBP1 with RAF1 to activate the ERK signaling cascade. The cofactor is Fe cation.

The protein resides in the cytoplasm. It localises to the cytosol. It is found in the cell membrane. Its subcellular location is the lipid droplet. The enzyme catalyses (5Z,8Z,11Z,14Z)-eicosatetraenoate + O2 = (12S)-hydroperoxy-(5Z,8Z,10E,14Z)-eicosatetraenoate. It carries out the reaction (5Z,8Z,11Z,14Z)-eicosatetraenoate + O2 = (15S)-hydroperoxy-(5Z,8Z,11Z,13E)-eicosatetraenoate. It catalyses the reaction (9Z,12Z)-octadecadienoate + O2 = (13S)-hydroperoxy-(9Z,11E)-octadecadienoate. The catalysed reaction is (5Z,8Z,11Z,14Z)-eicosatetraenoate + 2 O2 = (14R,15S)-dihydroperoxy-(5Z,8Z,10E,12E)-eicosatetraenoate. The enzyme catalyses (5Z,8Z,11Z,14Z)-eicosatetraenoate + 2 O2 = (8S,15S)-dihydroperoxy-(5Z,9E,11Z,13E)-eicosatetraenoate. It carries out the reaction (14S,15R)-epoxy-(5Z,8Z,11Z)-eicosatrienoate + O2 = (8S)-hydroperoxy-(14S,15R)-epoxy-(5Z,9E,11Z)-eicosatrienoate. It catalyses the reaction (14S,15R)-epoxy-(5Z,8Z,11Z)-eicosatrienoate + O2 = (12S)-hydroperoxy-(14S,15R)-epoxy-(5Z,8Z,10E)-eicosatrienoate. The catalysed reaction is (14R,15S)-epoxy-(5Z,8Z,11Z)-eicosatrienoate + O2 = (5S)-hydroperoxy-(14R,15S)-epoxy-(6E,8Z,11Z)-eicosatrienoate. The enzyme catalyses (14R,15S)-epoxy-(5Z,8Z,11Z)-eicosatrienoate + O2 = (12S)-hydroperoxy-(14R,15S)-epoxy-(5Z,8Z,10E)-eicosatrienoate. It carries out the reaction (15R)-hydroperoxy-(5Z,8Z,11Z,13E)-eicosatetraenoate = 15-oxo-(5Z,8Z,11Z,13E)-eicosatetraenoate + H2O. It catalyses the reaction (15S)-hydroperoxy-(5Z,8Z,11Z,13E)-eicosatetraenoate = (14S,15S)-epoxy-(5Z,8Z,10E,12E)-eicosatetraenoate + H2O. The catalysed reaction is (12S)-hydroperoxy-(5Z,8Z,10E,14Z)-eicosatetraenoate = (8S)-hydroxy-(11S,12S)-epoxy-(5Z,9E,14Z)-eicosatrienoate. The enzyme catalyses (4Z,7Z,10Z,13Z,16Z,19Z)-docosahexaenoate + O2 = 14-hydroperoxy-(4Z,7Z,10Z,12E,16Z,19Z)-docosahexaenoate. It carries out the reaction (4Z,7Z,10Z,13Z,16Z)-docosapentaenoate + O2 = 14-hydroperoxy-(4Z,7Z,10Z,12E,16Z)-docosapentaenoate. It catalyses the reaction (7Z,10Z,13Z,16Z,19Z)-docosapentaenoate + O2 = 14-hydroperoxy-(7Z,10Z,12E,16Z,19Z)-docosapentaenoate. The catalysed reaction is (4Z,7Z,10Z,13Z,16Z,19Z)-docosahexaenoate + O2 = (14S)-hydroperoxy-(4Z,7Z,10Z,12E,16Z,19Z)-docosahexaenoate. The enzyme catalyses (4Z,7Z,10Z,13Z,16Z,19Z)-docosahexaenoate + O2 = (17S)-hydroperoxy-(4Z,7Z,10Z,13Z,15E,19Z)-docosahexaenoate. It carries out the reaction (7S)-hydroperoxy-(4Z,8E,10Z,13Z,16Z,19Z)-docosahexaenoate + O2 = (7S,14S)-dihydroperoxy-(4Z,8E,10Z,12E,16Z,19Z)-docosahexaenoate. It catalyses the reaction (7S)-hydroperoxy-(4Z,8E,10Z,13Z,16Z,19Z)-docosahexaenoate + O2 = (7S,17S)-dihydroperoxy-(4Z,8E,10Z,13Z,15E,19Z)-docosahexaenoate. The catalysed reaction is (4Z,7Z,10Z,13Z,16Z,19Z)-docosahexaenoate + O2 = (11S)-hydroperoxy-(4Z,7Z,9E,13Z,16Z,19Z)-docosahexaenoate. The enzyme catalyses N-(5Z,8Z,11Z,14Z)-eicosatetraenoyl-taurine + O2 = N-(12S)-hydroperoxy-(5Z,8Z,10E,14Z)-eicosatetraenoyl-taurine. It carries out the reaction N-(5Z,8Z,11Z,14Z)-eicosatetraenoyl-gamma-aminobutanoate + O2 = N-(12S)-hydroperoxy-(5Z,8Z,10E,14Z)-eicosatetraenoyl-gamma-aminobutanoate. It catalyses the reaction N-(5Z,8Z,11Z,14Z)-eicosatetraenoyl-glycine + O2 = N-(12S)-hydroperoxy-(5Z,8Z,10E,14Z)-eicosatetraenoyl-glycine. The catalysed reaction is N-(5Z,8Z,11Z,14Z)-eicosatetraenoyl-L-alanine + O2 = N-(12S)-hydroperoxy-(5Z,8Z,10E,14Z)-eicosatetraenoyl-alanine. The enzyme catalyses N-(5Z,8Z,11Z,14Z)-eicosatetraenoyl-taurine + O2 = N-(15S)-hydroperoxy-(5Z,8Z,11Z,13E)-eicosatetraenoyl-taurine. It carries out the reaction N-(5Z,8Z,11Z,14Z)-eicosatetraenoyl-gamma-aminobutanoate + O2 = N-(15S)-hydroperoxy-(5Z,8Z,11Z,13E)-eicosatetraenoyl-gamma-aminobutanoate. It catalyses the reaction N-(5Z,8Z,11Z,14Z)-eicosatetraenoyl-glycine + O2 = N-(15S)-hydroperoxy-(5Z,8Z,11Z,13E)-eicosatetraenoyl-glycine. The catalysed reaction is N-(5Z,8Z,11Z,14Z)-eicosatetraenoyl-L-alanine + O2 = N-(15S)-hydroperoxy-(5Z,8Z,11Z,13E)-eicosatetraenoyl-alanine. It participates in lipid metabolism; hydroperoxy eicosatetraenoic acid biosynthesis. In terms of biological role, non-heme iron-containing dioxygenase that catalyzes the stereo-specific peroxidation of free and esterified polyunsaturated fatty acids generating a spectrum of bioactive lipid mediators. It inserts peroxyl groups at C12 or C15 of arachidonate ((5Z,8Z,11Z,14Z)-eicosatetraenoate) producing both 12-hydroperoxyeicosatetraenoate/12-HPETE and 15-hydroperoxyeicosatetraenoate/15-HPETE. It may then act on 12-HPETE to produce hepoxilins, which may show pro-inflammatory properties. Can also peroxidize linoleate ((9Z,12Z)-octadecadienoate) to 13-hydroperoxyoctadecadienoate. May participate in the sequential oxidations of DHA ((4Z,7Z,10Z,13Z,16Z,19Z)-docosahexaenoate) to generate specialized pro-resolving mediators (SPMs)like resolvin D5 ((7S,17S)-diHPDHA) and (7S,14S)-diHPDHA, that actively down-regulate the immune response and have anti-aggregation properties with platelets. Can convert epoxy fatty acids to hydroperoxy-epoxides derivatives followed by an intramolecular nucleophilic substitution leading to the formation of monocyclic endoperoxides. Plays an important role during the maintenance of self-tolerance by peroxidizing membrane-bound phosphatidylethanolamine which can then signal the sorting process for clearance of apoptotic cells during inflammation and prevent an autoimmune response. In addition to its role in the immune and inflammatory responses, this enzyme may play a role in epithelial wound healing in the cornea through production of lipoxin A4 (LXA(4)) and docosahexaenoic acid-derived neuroprotectin D1 (NPD1; 10R,17S-HDHA), both lipid autacoids exhibit anti-inflammatory and neuroprotective properties. Furthermore, it may regulate actin polymerization which is crucial for several biological processes such as the phagocytosis of apoptotic cells. It is also implicated in the generation of endogenous ligands for peroxisome proliferator activated receptor (PPAR-gamma), hence modulating macrophage development and function. It may also exert a negative effect on skeletal development by regulating bone mass through this pathway. As well as participates in ER stress and downstream inflammation in adipocytes, pancreatic islets, and liver. Finally, it is also involved in the cellular response to IL13/interleukin-13. This is Polyunsaturated fatty acid lipoxygenase ALOX15 from Sus scrofa (Pig).